The chain runs to 265 residues: Hydroxyethylthiazole kinase 1 (265 aa).

Methionine 39 provides a ligand contact to substrate. ATP contacts are provided by lysine 115 and threonine 168. Residue glycine 195 coordinates substrate.

Belongs to the Thz kinase family. It depends on Mg(2+) as a cofactor.

The catalysed reaction is 5-(2-hydroxyethyl)-4-methylthiazole + ATP = 4-methyl-5-(2-phosphooxyethyl)-thiazole + ADP + H(+). It functions in the pathway cofactor biosynthesis; thiamine diphosphate biosynthesis; 4-methyl-5-(2-phosphoethyl)-thiazole from 5-(2-hydroxyethyl)-4-methylthiazole: step 1/1. In terms of biological role, catalyzes the phosphorylation of the hydroxyl group of 4-methyl-5-beta-hydroxyethylthiazole (THZ). The protein is Hydroxyethylthiazole kinase 1 of Clostridium botulinum (strain Loch Maree / Type A3).